A 233-amino-acid polypeptide reads, in one-letter code: ATP-dependent Clp protease proteolytic subunit 1 (233 aa).

Catalysis depends on serine 136, which acts as the Nucleophile. The active site involves histidine 161.

This sequence belongs to the peptidase S14 family. In terms of assembly, fourteen ClpP subunits assemble into 2 heptameric rings which stack back to back to give a disk-like structure with a central cavity, resembling the structure of eukaryotic proteasomes.

The protein localises to the cytoplasm. It carries out the reaction Hydrolysis of proteins to small peptides in the presence of ATP and magnesium. alpha-casein is the usual test substrate. In the absence of ATP, only oligopeptides shorter than five residues are hydrolyzed (such as succinyl-Leu-Tyr-|-NHMec, and Leu-Tyr-Leu-|-Tyr-Trp, in which cleavage of the -Tyr-|-Leu- and -Tyr-|-Trp bonds also occurs).. Functionally, cleaves peptides in various proteins in a process that requires ATP hydrolysis. Has a chymotrypsin-like activity. Plays a major role in the degradation of misfolded proteins. The sequence is that of ATP-dependent Clp protease proteolytic subunit 1 from Bifidobacterium longum (strain NCC 2705).